We begin with the raw amino-acid sequence, 331 residues long: NADH-quinone oxidoreductase subunit H (331 aa).

8 helical membrane-spanning segments follow: residues 13–33 (FLIS…VLTL), 80–100 (WVFL…WLVI), 113–133 (IGLV…IMAG), 159–179 (LILS…VDIV), 183–203 (AGGF…AFFV), 249–269 (VMSA…LPFL), 273–293 (VFNW…FQWI), and 311–331 (KILV…MLVI).

This sequence belongs to the complex I subunit 1 family. NDH-1 is composed of 14 different subunits. Subunits NuoA, H, J, K, L, M, N constitute the membrane sector of the complex.

The protein resides in the cell membrane. The enzyme catalyses a quinone + NADH + 5 H(+)(in) = a quinol + NAD(+) + 4 H(+)(out). In terms of biological role, NDH-1 shuttles electrons from NADH, via FMN and iron-sulfur (Fe-S) centers, to quinones in the respiratory chain. The immediate electron acceptor for the enzyme in this species is believed to be ubiquinone. Couples the redox reaction to proton translocation (for every two electrons transferred, four hydrogen ions are translocated across the cytoplasmic membrane), and thus conserves the redox energy in a proton gradient. This subunit may bind ubiquinone. This chain is NADH-quinone oxidoreductase subunit H, found in Rubrobacter xylanophilus (strain DSM 9941 / JCM 11954 / NBRC 16129 / PRD-1).